The chain runs to 331 residues: MSKVAFLGAGSFGTSLGILLGNKGVTVSLWDRDENVINDINVNRKNDKYIKDLTIPTNVTAYKDLDEALNGAEYVVLAVPSHVIRTACKNLKGKINDDVIIINIAKGIEEGTNLRLSQVINQELPNNKVVVLSGPSHAEEVSKGIPTTLVASSECMECAEKVQDLFMDKNFRIYTNDDIIGVEIGGAVKNIIALAAGVCDGIGYGDNSKAALMTRGMAEIARIGIKMGGKAETFFGLTGMGDLIVTCTSMHSRNRRAGILIGQGKTAEEAIKEVGMVVEGIKACKAFYELKEKEGVTMPITDIAYKVLFEGAKAENAVSLLMERDKKKEEI.

4 residues coordinate NADPH: Ser11, Phe12, Arg32, and Lys106. Lys106, Gly134, and Ser136 together coordinate sn-glycerol 3-phosphate. NADPH is bound at residue Ala138. 5 residues coordinate sn-glycerol 3-phosphate: Lys189, Asp242, Ser252, Arg253, and Asn254. Lys189 acts as the Proton acceptor in catalysis. Arg253 lines the NADPH pocket. Val277 and Glu279 together coordinate NADPH.

It belongs to the NAD-dependent glycerol-3-phosphate dehydrogenase family.

The protein resides in the cytoplasm. It carries out the reaction sn-glycerol 3-phosphate + NAD(+) = dihydroxyacetone phosphate + NADH + H(+). The catalysed reaction is sn-glycerol 3-phosphate + NADP(+) = dihydroxyacetone phosphate + NADPH + H(+). It functions in the pathway membrane lipid metabolism; glycerophospholipid metabolism. Catalyzes the reduction of the glycolytic intermediate dihydroxyacetone phosphate (DHAP) to sn-glycerol 3-phosphate (G3P), the key precursor for phospholipid synthesis. This Clostridium perfringens (strain SM101 / Type A) protein is Glycerol-3-phosphate dehydrogenase [NAD(P)+].